Reading from the N-terminus, the 1464-residue chain is DNA polymerase III PolC-type (1464 aa).

Residues 426-582 (YVVFDVETTG…YDAEATGRLL (157 aa)) form the Exonuclease domain.

The protein belongs to the DNA polymerase type-C family. PolC subfamily.

The protein resides in the cytoplasm. It catalyses the reaction DNA(n) + a 2'-deoxyribonucleoside 5'-triphosphate = DNA(n+1) + diphosphate. Functionally, required for replicative DNA synthesis. This DNA polymerase also exhibits 3' to 5' exonuclease activity. The protein is DNA polymerase III PolC-type of Streptococcus thermophilus (strain ATCC BAA-250 / LMG 18311).